A 270-amino-acid polypeptide reads, in one-letter code: Acyl-[acyl-carrier-protein]--UDP-N-acetylglucosamine O-acyltransferase (270 aa).

It belongs to the transferase hexapeptide repeat family. LpxA subfamily. As to quaternary structure, homotrimer.

The protein resides in the cytoplasm. The catalysed reaction is a (3R)-hydroxyacyl-[ACP] + UDP-N-acetyl-alpha-D-glucosamine = a UDP-3-O-[(3R)-3-hydroxyacyl]-N-acetyl-alpha-D-glucosamine + holo-[ACP]. It functions in the pathway glycolipid biosynthesis; lipid IV(A) biosynthesis; lipid IV(A) from (3R)-3-hydroxytetradecanoyl-[acyl-carrier-protein] and UDP-N-acetyl-alpha-D-glucosamine: step 1/6. In terms of biological role, involved in the biosynthesis of lipid A, a phosphorylated glycolipid that anchors the lipopolysaccharide to the outer membrane of the cell. The polypeptide is Acyl-[acyl-carrier-protein]--UDP-N-acetylglucosamine O-acyltransferase (Helicobacter pylori (strain HPAG1)).